We begin with the raw amino-acid sequence, 280 residues long: Biotin carboxyl carrier protein of acetyl-CoA carboxylase 1, chloroplastic (280 aa).

The N-terminal 82 residues, 1–82 (MASSSFSVTS…SNAAKVDGPS (82 aa)), are a transit peptide targeting the chloroplast. Positions 52 to 75 (PSRSSYPVVKAQSNKVSTGASSNA) are enriched in polar residues. 2 disordered regions span residues 52–106 (PSRS…ATEE) and 164–215 (QPSY…GTFY). The span at 177–188 (PAAAAPAPSTPA) shows a compositional bias: low complexity. Residues 189–198 (SLPPPSPPTP) show a composition bias toward pro residues. One can recognise a Biotinyl-binding domain in the interval 203 to 279 (LPTVKSPMAG…SLDTPLFVVQ (77 aa)). Lys245 carries the N6-biotinyllysine modification.

As to quaternary structure, acetyl-CoA carboxylase is a heterohexamer composed of biotin carboxyl carrier protein, biotin carboxylase and 2 subunits each of ACCase subunit alpha and ACCase plastid-coded subunit beta (accD). In terms of tissue distribution, present in developing tissues from roots, leaves, flowers, siliques and seeds (at protein level).

The protein resides in the plastid. It is found in the chloroplast. The protein operates within lipid metabolism; fatty acid biosynthesis. Functionally, this protein is a component of the acetyl coenzyme A carboxylase complex; first, biotin carboxylase catalyzes the carboxylation of the carrier protein and then the transcarboxylase transfers the carboxyl group to form malonyl-CoA. This Arabidopsis thaliana (Mouse-ear cress) protein is Biotin carboxyl carrier protein of acetyl-CoA carboxylase 1, chloroplastic (BCCP1).